A 73-amino-acid polypeptide reads, in one-letter code: Small ribosomal subunit protein bS18 (73 aa).

This sequence belongs to the bacterial ribosomal protein bS18 family. Part of the 30S ribosomal subunit. Forms a tight heterodimer with protein bS6.

Binds as a heterodimer with protein bS6 to the central domain of the 16S rRNA, where it helps stabilize the platform of the 30S subunit. The protein is Small ribosomal subunit protein bS18 of Synechococcus sp. (strain RCC307).